The primary structure comprises 441 residues: Trigger factor (441 aa).

In terms of domain architecture, PPIase FKBP-type spans 161 to 246; it reads GDKVTIDFLG…VHEVLGEKLP (86 aa).

Belongs to the FKBP-type PPIase family. Tig subfamily.

The protein localises to the cytoplasm. It carries out the reaction [protein]-peptidylproline (omega=180) = [protein]-peptidylproline (omega=0). Its function is as follows. Involved in protein export. Acts as a chaperone by maintaining the newly synthesized protein in an open conformation. Functions as a peptidyl-prolyl cis-trans isomerase. The polypeptide is Trigger factor (Teredinibacter turnerae (strain ATCC 39867 / T7901)).